Reading from the N-terminus, the 856-residue chain is MAP kinase phosphatase with leucine-rich repeats protein 3 (856 aa).

A compositionally biased stretch (low complexity) spans 1 to 10; that stretch reads MGNSHSSENG. Disordered regions lie at residues 1 to 24, 84 to 195, and 214 to 326; these read MGNS…GGGS, VKKN…SSVL, and DDNS…NAKD. A lipid anchor (N-myristoyl glycine) is attached at G2. Positions 11–24 are enriched in gly residues; it reads GNSGSGGGSGGGGS. A compositionally biased stretch (low complexity) spans 90 to 142; it reads NSSNNNSNNNSNNNNNNNTLNNSTIITTTTTTTTTSTPTTTIMITPPQQQQQQ. Residues 155-165 are compositionally biased toward polar residues; the sequence is ESSTPNEQQIR. 2 stretches are compositionally biased toward low complexity: residues 178–195 and 224–243; these read ESSF…SSVL and QQQQ…QQTQ. Polar residues-rich tracts occupy residues 254–265 and 272–281; these read IVNNKSSSTTNI and AQTSRSTSIP. Residues 306–323 are compositionally biased toward low complexity; the sequence is NSLSSSNIITPNNTTNTN. LRR repeat units follow at residues 344–365, 370–391, 392–413, 416–437, 439–461, 462–484, 485–506, and 507–528; these read KIFS…ILSI, EIQE…QLVK, SLTT…VFIE, SLTS…IDQI, NLKY…SNLS, QLIS…DDLI, NLRM…RKLV, and NLVT…FAYL. A disordered region spans residues 554–577; sequence NINSNNNDSNNSNNNNNNNNDNNN. Positions 632 to 773 constitute a Tyrosine-protein phosphatase domain; it reads IPSEIIPGIF…LLKYEAKLFC (142 aa). C717 acts as the Phosphocysteine intermediate in catalysis. The interval 810–856 is disordered; the sequence is INNSSNSNNNNSTDNSNNSSTSTTPNLSSLSSDSSSSASLSKLSISK.

The protein belongs to the protein-tyrosine phosphatase family. Non-receptor class dual specificity subfamily.

It catalyses the reaction O-phospho-L-tyrosyl-[protein] + H2O = L-tyrosyl-[protein] + phosphate. It carries out the reaction O-phospho-L-seryl-[protein] + H2O = L-seryl-[protein] + phosphate. The catalysed reaction is O-phospho-L-threonyl-[protein] + H2O = L-threonyl-[protein] + phosphate. Functionally, probable phosphatase with dual specificity toward Ser/Thr and Tyr-containing proteins. The protein is MAP kinase phosphatase with leucine-rich repeats protein 3 (mpl3) of Dictyostelium discoideum (Social amoeba).